Consider the following 77-residue polypeptide: NAD(P)H-quinone oxidoreductase subunit L (77 aa).

The next 2 helical transmembrane spans lie at 12–32 (LIAY…LLFY) and 47–67 (LGIY…SPFL).

Belongs to the complex I NdhL subunit family. As to quaternary structure, NDH-1 can be composed of about 15 different subunits; different subcomplexes with different compositions have been identified which probably have different functions.

The protein localises to the cellular thylakoid membrane. It carries out the reaction a plastoquinone + NADH + (n+1) H(+)(in) = a plastoquinol + NAD(+) + n H(+)(out). It catalyses the reaction a plastoquinone + NADPH + (n+1) H(+)(in) = a plastoquinol + NADP(+) + n H(+)(out). NDH-1 shuttles electrons from an unknown electron donor, via FMN and iron-sulfur (Fe-S) centers, to quinones in the respiratory and/or the photosynthetic chain. The immediate electron acceptor for the enzyme in this species is believed to be plastoquinone. Couples the redox reaction to proton translocation, and thus conserves the redox energy in a proton gradient. Cyanobacterial NDH-1 also plays a role in inorganic carbon-concentration. In Prochlorococcus marinus (strain MIT 9301), this protein is NAD(P)H-quinone oxidoreductase subunit L.